The sequence spans 229 residues: Orotidine 5'-phosphate decarboxylase (229 aa).

Substrate contacts are provided by residues aspartate 10, lysine 32, 59–68, threonine 119, arginine 180, glutamine 189, glycine 209, and arginine 210; that span reads DLKFHDIPNT. Lysine 61 functions as the Proton donor in the catalytic mechanism.

This sequence belongs to the OMP decarboxylase family. Type 1 subfamily. In terms of assembly, homodimer.

It catalyses the reaction orotidine 5'-phosphate + H(+) = UMP + CO2. It participates in pyrimidine metabolism; UMP biosynthesis via de novo pathway; UMP from orotate: step 2/2. Its function is as follows. Catalyzes the decarboxylation of orotidine 5'-monophosphate (OMP) to uridine 5'-monophosphate (UMP). In Legionella pneumophila (strain Corby), this protein is Orotidine 5'-phosphate decarboxylase.